Consider the following 544-residue polypeptide: Serine/threonine-protein kinase PAK 3 (544 aa).

Positions 1–73 (MSDSLDNEEK…EKERPEISLP (73 aa)) are disordered. Residues Ser2 and Ser4 each carry the phosphoserine modification. Polar residues predominate over residues 18–32 (MNSNNRDSSALNHSS). The residue at position 50 (Ser50) is a Phosphoserine; by autocatalysis. Positions 63–73 (KEKERPEISLP) are enriched in basic and acidic residues. The tract at residues 65-108 (KERPEISLPSDFEHTIHVGFDAVTGEFTGIPEQWARLLQTSNIT) is GTPase-binding. An autoregulatory region region spans residues 65 to 135 (KERPEISLPS…YDSKETVNNQ (71 aa)). The region spanning 70-83 (ISLPSDFEHTIHVG) is the CRIB domain. The segment at 84–267 (FDAVTGEFTG…IVSVGDPKKK (184 aa)) is linker. Ser139 is modified (phosphoserine; by autocatalysis). Disordered stretches follow at residues 156–197 (SNTK…RPEH) and 213–248 (PAAP…KMTD). Ser171 bears the Phosphoserine mark. The span at 171–186 (SEEEDEEEEEEEDDNE) shows a compositional bias: acidic residues. Over residues 224 to 235 (SAENANSSTLYR) the composition is skewed to polar residues. The Protein kinase domain maps to 268-519 (YTRFEKIGQG…AKELLQHPFL (252 aa)). ATP-binding positions include 274–282 (IGQGASGTV) and Lys297. Asp387 serves as the catalytic Proton acceptor. Residue Thr421 is modified to Phosphothreonine; by autocatalysis.

It belongs to the protein kinase superfamily. STE Ser/Thr protein kinase family. STE20 subfamily. Interacts tightly with GTP-bound but not GDP-bound CDC42/p21 and RAC1. Shows highly specific binding to the SH3 domains of phospholipase C-gamma and of adapter protein NCK. Interacts with the C-terminal of APP. Interacts with ARHGEF6 and ARHGEF7. Interacts with GIT1 and GIT2. The cofactor is Mg(2+). Post-translationally, autophosphorylated when activated by CDC42/p21. In terms of processing, neddylated. In terms of tissue distribution, detected at high levels in the brain and at low levels in the testis.

Its subcellular location is the cytoplasm. The enzyme catalyses L-seryl-[protein] + ATP = O-phospho-L-seryl-[protein] + ADP + H(+). It carries out the reaction L-threonyl-[protein] + ATP = O-phospho-L-threonyl-[protein] + ADP + H(+). Activated by binding small G proteins. Binding of GTP-bound CDC42 or RAC1 to the autoregulatory region releases monomers from the autoinhibited dimer, enables phosphorylation of Thr-421 and allows the kinase domain to adopt an active structure. In terms of biological role, serine/threonine protein kinase that plays a role in a variety of different signaling pathways including cytoskeleton regulation, cell migration, or cell cycle regulation. Plays a role in dendrite spine morphogenesis as well as synapse formation and plasticity. Acts as a downstream effector of the small GTPases CDC42 and RAC1. Activation by the binding of active CDC42 and RAC1 results in a conformational change and a subsequent autophosphorylation on several serine and/or threonine residues. Phosphorylates MAPK4 and MAPK6 and activates the downstream target MAPKAPK5, a regulator of F-actin polymerization and cell migration. Additionally, phosphorylates TNNI3/troponin I to modulate calcium sensitivity and relaxation kinetics of thin myofilaments. May also be involved in early neuronal development. In hippocampal neurons, necessary for the formation of dendritic spines and excitatory synapses; this function is dependent on kinase activity and may be exerted by the regulation of actomyosin contractility through the phosphorylation of myosin II regulatory light chain (MLC). This Rattus norvegicus (Rat) protein is Serine/threonine-protein kinase PAK 3 (Pak3).